The primary structure comprises 431 residues: Glucose-1-phosphate adenylyltransferase (431 aa).

Lys-39 lines the beta-D-fructose 1,6-bisphosphate pocket. 3 residues coordinate AMP: Arg-40, His-46, and Arg-52. Tyr-114 is a binding site for alpha-D-glucose 1-phosphate. AMP is bound at residue Arg-130. Alpha-D-glucose 1-phosphate is bound by residues Gly-179, 194–195 (EK), and Ser-212. Residue Arg-386 participates in AMP binding. Residue 429–431 (QER) participates in beta-D-fructose 1,6-bisphosphate binding.

Belongs to the bacterial/plant glucose-1-phosphate adenylyltransferase family. Homotetramer.

It carries out the reaction alpha-D-glucose 1-phosphate + ATP + H(+) = ADP-alpha-D-glucose + diphosphate. It functions in the pathway glycan biosynthesis; glycogen biosynthesis. Its activity is regulated as follows. Allosterically activated by fructose-1,6-bisphosphate (F16BP) and inhibited by AMP. Involved in the biosynthesis of ADP-glucose, a building block required for the elongation reactions to produce glycogen. Catalyzes the reaction between ATP and alpha-D-glucose 1-phosphate (G1P) to produce pyrophosphate and ADP-Glc. The sequence is that of Glucose-1-phosphate adenylyltransferase from Klebsiella pneumoniae (strain 342).